A 161-amino-acid polypeptide reads, in one-letter code: Nucleotide-binding protein Pnuc_0290 (161 aa).

The protein belongs to the YajQ family.

Nucleotide-binding protein. The polypeptide is Nucleotide-binding protein Pnuc_0290 (Polynucleobacter asymbioticus (strain DSM 18221 / CIP 109841 / QLW-P1DMWA-1) (Polynucleobacter necessarius subsp. asymbioticus)).